The sequence spans 202 residues: MDFVSRPTTETAKALLGVKVIYEDEFQTYSGYIVETEAYLGFTDRAAHGFGGKQTPKVTSLYKRGGTIYGHVMHTHLLVNFVTQNEGVPEGVLIRAIEPLDGIEMMKHNRNKSGYELTNGPGKWTKAFNIPRAIDGATLNDCRLSIDTKHRKYPRDIVESARIGIPNKGDWTNKPLRYTVKGNPFVSHIRKSDCLNPDETWK.

It belongs to the DNA glycosylase MPG family.

The sequence is that of Putative 3-methyladenine DNA glycosylase from Staphylococcus haemolyticus (strain JCSC1435).